The chain runs to 430 residues: Asparagine--tRNA ligase (430 aa).

It belongs to the class-II aminoacyl-tRNA synthetase family. Homodimer.

Its subcellular location is the cytoplasm. It carries out the reaction tRNA(Asn) + L-asparagine + ATP = L-asparaginyl-tRNA(Asn) + AMP + diphosphate + H(+). The sequence is that of Asparagine--tRNA ligase from Staphylococcus haemolyticus (strain JCSC1435).